The following is a 217-amino-acid chain: Cytidylate kinase (217 aa).

Residue 10-18 (GPAGAGKST) coordinates ATP.

The protein belongs to the cytidylate kinase family. Type 1 subfamily.

The protein localises to the cytoplasm. The enzyme catalyses CMP + ATP = CDP + ADP. The catalysed reaction is dCMP + ATP = dCDP + ADP. This is Cytidylate kinase from Clostridium botulinum (strain Loch Maree / Type A3).